Reading from the N-terminus, the 49-residue chain is MFKRKSTAELAAQMAKLAGNKGGFSSEDKGEWKLKLDNAGNGQAVIRFL.

As to quaternary structure, homodimer in the absence of DNA, monomer when binding DNA.

Functionally, binds preferentially to single-stranded DNA and therefore, destabilizes double-stranded DNA. It is involved in DNA replication, repair and recombination. Binds ss-DNA as the replication fork advances and stimulates the replisome processivity and accuracy. This chain is Single-stranded DNA-binding protein (32), found in Escherichia coli (Bacteriophage RB32).